A 330-amino-acid chain; its full sequence is Major ferric iron-binding protein (330 aa).

Residues 1–22 form the signal peptide; it reads MKTSIRYALLAAALTAATPALA. Fe cation-binding residues include histidine 31, glutamate 79, tyrosine 217, and tyrosine 218.

This sequence belongs to the bacterial solute-binding protein 1 family.

The protein localises to the periplasm. Its function is as follows. This protein may be a central component in the iron-acquisition system. This Neisseria gonorrhoeae protein is Major ferric iron-binding protein (fbp).